A 109-amino-acid chain; its full sequence is B melanoma antigen 3 (109 aa).

The N-terminal stretch at 1-17 (MAAGVVFLALSAQLLQA) is a signal peptide.

Belongs to the BAGE family. As to expression, not expressed in normal tissues except in testis. Expressed in melanoma, bladder and lung carcinomas.

Its subcellular location is the secreted. Functionally, unknown. Candidate gene encoding tumor antigens. This Homo sapiens (Human) protein is B melanoma antigen 3 (BAGE3).